We begin with the raw amino-acid sequence, 302 residues long: Methionyl-tRNA formyltransferase (302 aa).

Position 107-110 (107-110 (SLLP)) interacts with (6S)-5,6,7,8-tetrahydrofolate.

Belongs to the Fmt family.

The catalysed reaction is L-methionyl-tRNA(fMet) + (6R)-10-formyltetrahydrofolate = N-formyl-L-methionyl-tRNA(fMet) + (6S)-5,6,7,8-tetrahydrofolate + H(+). In terms of biological role, attaches a formyl group to the free amino group of methionyl-tRNA(fMet). The formyl group appears to play a dual role in the initiator identity of N-formylmethionyl-tRNA by promoting its recognition by IF2 and preventing the misappropriation of this tRNA by the elongation apparatus. The chain is Methionyl-tRNA formyltransferase from Leifsonia xyli subsp. xyli (strain CTCB07).